Reading from the N-terminus, the 389-residue chain is 8-amino-7-oxononanoate synthase (389 aa).

Arginine 19 provides a ligand contact to substrate. 106–107 (GY) is a binding site for pyridoxal 5'-phosphate. Histidine 131 is a binding site for substrate. Pyridoxal 5'-phosphate is bound by residues serine 176, histidine 204, and threonine 233. Lysine 236 is subject to N6-(pyridoxal phosphate)lysine. Residue threonine 350 participates in substrate binding.

Belongs to the class-II pyridoxal-phosphate-dependent aminotransferase family. BioF subfamily. As to quaternary structure, homodimer. Requires pyridoxal 5'-phosphate as cofactor.

The enzyme catalyses 6-carboxyhexanoyl-[ACP] + L-alanine + H(+) = (8S)-8-amino-7-oxononanoate + holo-[ACP] + CO2. The protein operates within cofactor biosynthesis; biotin biosynthesis. Functionally, catalyzes the decarboxylative condensation of pimeloyl-[acyl-carrier protein] and L-alanine to produce 8-amino-7-oxononanoate (AON), [acyl-carrier protein], and carbon dioxide. This chain is 8-amino-7-oxononanoate synthase, found in Ectopseudomonas mendocina (strain ymp) (Pseudomonas mendocina).